Consider the following 407-residue polypeptide: Aurora kinase (407 aa).

2 disordered regions span residues 1-43 (MTPT…STSS) and 66-137 (ERQG…TQSK). 2 stretches are compositionally biased toward low complexity: residues 31–43 (SASTTSTTASTSS) and 126–136 (STTTTMTSTQS). Residues 147–399 (FDIGRPLGKG…LEGVIAHAWI (253 aa)) enclose the Protein kinase domain. Residues K157, K176, and 224 to 227 (LEYA) each bind ATP. The active-site Proton acceptor is D272. D290 contributes to the ATP binding site.

Belongs to the protein kinase superfamily. Ser/Thr protein kinase family.

Its subcellular location is the cytoplasm. It localises to the cytoskeleton. The protein localises to the spindle. It is found in the midbody. The protein resides in the microtubule organizing center. Its subcellular location is the centrosome. It localises to the nucleus. The protein localises to the chromosome. It is found in the centromere. It carries out the reaction L-seryl-[protein] + ATP = O-phospho-L-seryl-[protein] + ADP + H(+). The enzyme catalyses L-threonyl-[protein] + ATP = O-phospho-L-threonyl-[protein] + ADP + H(+). Cdc2 activity is required for activation. Serine/threonine protein kinase that contributes to the regulation of cell cycle progression. Involved in meiotic apparatus formation and polar body extrusion. Contributes to Plk1 activation and phosphorylation of histone H3 at 'Ser-10' during meiosis I. Required for accurate progression of early embryonic M phase. Involved in chromosome alignment and cleavage furrow formation during early embryonic cycles. May be involved in mitotic spindle formation and cytokinesis. This is Aurora kinase from Patiria pectinifera (Starfish).